We begin with the raw amino-acid sequence, 67 residues long: uncharacterized protein (67 aa).

Residues 26 to 46 (CYLLFCFLECFLNLFKKCGVF) form a helical membrane-spanning segment.

This sequence belongs to the plectrovirus ORF11 family.

The protein resides in the host membrane. This is an uncharacterized protein from Spiroplasma virus SpV1-C74 (SpV1).